A 679-amino-acid polypeptide reads, in one-letter code: Protein hook (679 aa).

The region spanning 6 to 123 (NEMYYSLLEW…RLLQLVLGCA (118 aa)) is the Calponin-homology (CH) domain. 2 coiled-coil regions span residues 135-437 (EIMC…LKCG) and 480-574 (QTAL…QEIL).

The protein belongs to the hook family. Homodimer. Interacts with microtubules via its N-terminus.

The protein localises to the cytoplasm. The protein resides in the cytoskeleton. It localises to the endosome. Its subcellular location is the synapse. Functionally, involved in endocytic trafficking by stabilizing organelles of the endocytic pathway. Probably acts as a cytoskeletal linker protein required to tether endosome vesicles to the cytoskeleton. Involved in modulation of endocytosis at stages required for down-regulation of membrane proteins that control synapse size. Not involved in synaptic vesicle recycling. Required in R7 cells for boss endocytosis into multivesicular bodies (MVBs). Has a role in regulating adult longevity. The chain is Protein hook from Drosophila sechellia (Fruit fly).